A 423-amino-acid polypeptide reads, in one-letter code: Phosphoribosylamine--glycine ligase (423 aa).

An ATP-grasp domain is found at lysine 107 to aspartate 314. Valine 133–serine 194 contributes to the ATP binding site. The Mg(2+) site is built by glutamate 284 and asparagine 286.

This sequence belongs to the GARS family. Mg(2+) serves as cofactor. Mn(2+) is required as a cofactor.

The catalysed reaction is 5-phospho-beta-D-ribosylamine + glycine + ATP = N(1)-(5-phospho-beta-D-ribosyl)glycinamide + ADP + phosphate + H(+). The protein operates within purine metabolism; IMP biosynthesis via de novo pathway; N(1)-(5-phospho-D-ribosyl)glycinamide from 5-phospho-alpha-D-ribose 1-diphosphate: step 2/2. The protein is Phosphoribosylamine--glycine ligase of Neisseria meningitidis serogroup B (strain ATCC BAA-335 / MC58).